Consider the following 566-residue polypeptide: Poly(A) polymerase pla1 (566 aa).

ATP contacts are provided by residues Tyr86–Ser88, Asp99–Asp101, Asp153, Lys214, Tyr223, and Gly232–Val233. 3 residues coordinate Mg(2+): Asp99, Asp101, and Asp153. Disordered regions lie at residues His437 to Gly463 and Asp530 to Ala566.

The protein belongs to the poly(A) polymerase family. Mg(2+) is required as a cofactor. It depends on Mn(2+) as a cofactor.

Its subcellular location is the nucleus. It carries out the reaction RNA(n) + ATP = RNA(n)-3'-adenine ribonucleotide + diphosphate. Functionally, polymerase that creates the 3'-poly(A) tail of mRNA's. May acquire specificity through interaction with a cleavage and polyadenylation factor (CF I). The chain is Poly(A) polymerase pla1 (pla1) from Schizosaccharomyces pombe (strain 972 / ATCC 24843) (Fission yeast).